Consider the following 75-residue polypeptide: UPF0352 protein VSAL_I1058 (75 aa).

It belongs to the UPF0352 family.

The sequence is that of UPF0352 protein VSAL_I1058 from Aliivibrio salmonicida (strain LFI1238) (Vibrio salmonicida (strain LFI1238)).